The following is a 151-amino-acid chain: UPF0735 ACT domain-containing protein SSP1116 (151 aa).

Residues 74–149 (TLILYVNDIV…HVSKVELISM (76 aa)) form the ACT domain.

Belongs to the UPF0735 family.

The polypeptide is UPF0735 ACT domain-containing protein SSP1116 (Staphylococcus saprophyticus subsp. saprophyticus (strain ATCC 15305 / DSM 20229 / NCIMB 8711 / NCTC 7292 / S-41)).